An 800-amino-acid polypeptide reads, in one-letter code: Protein MEI2-like 5 (800 aa).

2 RRM domains span residues 168-241 (RTLF…FSIP) and 253-326 (GTLV…PSRP). Phosphoserine occurs at positions 384 and 390. Disordered stretches follow at residues 470–489 (GSPNARSEPSSSSVWSTSST) and 776–800 (VVDEESKNMDLLDSQLSDDDGRERS). A compositionally biased stretch (low complexity) spans 471–488 (SPNARSEPSSSSVWSTSS). Phosphoserine occurs at positions 789 and 792.

Its function is as follows. Probable RNA-binding protein that plays a role in meiosis and vegetative growth. The protein is Protein MEI2-like 5 (ML5) of Arabidopsis thaliana (Mouse-ear cress).